Consider the following 137-residue polypeptide: Large ribosomal subunit protein uL16 (137 aa).

The protein belongs to the universal ribosomal protein uL16 family. In terms of assembly, part of the 50S ribosomal subunit.

Functionally, binds 23S rRNA and is also seen to make contacts with the A and possibly P site tRNAs. The protein is Large ribosomal subunit protein uL16 of Cellvibrio japonicus (strain Ueda107) (Pseudomonas fluorescens subsp. cellulosa).